A 318-amino-acid chain; its full sequence is Transcription factor MYBS3 (318 aa).

2 disordered regions span residues 1-20 and 50-98; these read MTRRCSHCSHNGHNSRTCPN and AAGS…PWTE. The CCHC-type zinc-finger motif lies at 3–20; it reads RRCSHCSHNGHNSRTCPN. A compositionally biased stretch (polar residues) spans 8–18; sequence CSHNGHNSRTC. Low complexity predominate over residues 50 to 77; the sequence is AAGSTSGGASPADGPDAAPTAADGYASD. The HTH myb-type domain occupies 88-144; it reads RDRKKGVPWTEEEHRRFLLGLQKLGKGDWRGISRNFVVSRTPTQVASHAQKYFIRQS. The H-T-H motif DNA-binding region spans 116–140; that stretch reads WRGISRNFVVSRTPTQVASHAQKYF. The interval 159 to 200 is disordered; the sequence is VPDESMDLPPLPGGQEPETQVLNQPALPPPREEEEVDSMESD.

In terms of tissue distribution, expressed in all tissues, with the highest level in senescent leaves.

Its subcellular location is the nucleus. Functionally, transcription repressor that binds to 5'-TATCCA-3' elements in gene promoters. Contributes to the sugar-repressed transcription of promoters containing SRS or 5'-TATCCA-3' elements. Transcription repressor involved in a cold stress response pathway that confers cold tolerance. Suppresses the DREB1-dependent signaling pathway under prolonged cold stress. DREB1 responds quickly and transiently while MYBS3 responds slowly to cold stress. They may act sequentially and complementarily for adaptation to short- and long-term cold stress. This Oryza sativa subsp. japonica (Rice) protein is Transcription factor MYBS3.